Consider the following 461-residue polypeptide: UPF0053 protein YhdT (461 aa).

The 202-residue stretch at 1–202 (MDDIDSLILI…LKNGEINPSE (202 aa)) folds into the CNNM transmembrane domain. 3 helical membrane passes run 8-28 (ILIG…FAIV), 103-123 (VSFA…GELA), and 137-157 (LLIA…IWIL). CBS domains are found at residues 221–280 (MIPR…MTEE) and 290–347 (YVRP…IRDE).

Belongs to the UPF0053 family.

It localises to the cell membrane. In Bacillus subtilis (strain 168), this protein is UPF0053 protein YhdT (yhdT).